A 35-amino-acid chain; its full sequence is MEVNDLGFIATILFVLVPTVFLLILYIQTREETES.

A helical membrane pass occupies residues 7 to 27 (GFIATILFVLVPTVFLLILYI).

It belongs to the PsbM family. As to quaternary structure, PSII is composed of 1 copy each of membrane proteins PsbA, PsbB, PsbC, PsbD, PsbE, PsbF, PsbH, PsbI, PsbJ, PsbK, PsbL, PsbM, PsbT, PsbX, PsbY, PsbZ, Psb30/Ycf12, peripheral proteins PsbO, CyanoQ (PsbQ), PsbU, PsbV and a large number of cofactors. It forms dimeric complexes.

The protein resides in the cellular thylakoid membrane. In terms of biological role, one of the components of the core complex of photosystem II (PSII). PSII is a light-driven water:plastoquinone oxidoreductase that uses light energy to abstract electrons from H(2)O, generating O(2) and a proton gradient subsequently used for ATP formation. It consists of a core antenna complex that captures photons, and an electron transfer chain that converts photonic excitation into a charge separation. This subunit is found at the monomer-monomer interface. This Crocosphaera subtropica (strain ATCC 51142 / BH68) (Cyanothece sp. (strain ATCC 51142)) protein is Photosystem II reaction center protein M.